The chain runs to 413 residues: Putative competence-damage inducible protein (413 aa).

This sequence belongs to the CinA family.

The protein is Putative competence-damage inducible protein of Desulforudis audaxviator (strain MP104C).